The primary structure comprises 212 residues: Imidazole glycerol phosphate synthase subunit HisH 2 (212 aa).

A Glutamine amidotransferase type-1 domain is found at 4–211; it reads HLGLIDYGMG…LDWLQRGAPI (208 aa). Cys-82 functions as the Nucleophile in the catalytic mechanism. Catalysis depends on residues His-186 and Glu-188.

Heterodimer of HisH and HisF.

It localises to the cytoplasm. The catalysed reaction is 5-[(5-phospho-1-deoxy-D-ribulos-1-ylimino)methylamino]-1-(5-phospho-beta-D-ribosyl)imidazole-4-carboxamide + L-glutamine = D-erythro-1-(imidazol-4-yl)glycerol 3-phosphate + 5-amino-1-(5-phospho-beta-D-ribosyl)imidazole-4-carboxamide + L-glutamate + H(+). It catalyses the reaction L-glutamine + H2O = L-glutamate + NH4(+). Its pathway is amino-acid biosynthesis; L-histidine biosynthesis; L-histidine from 5-phospho-alpha-D-ribose 1-diphosphate: step 5/9. IGPS catalyzes the conversion of PRFAR and glutamine to IGP, AICAR and glutamate. The HisH subunit provides the glutamine amidotransferase activity that produces the ammonia necessary to HisF for the synthesis of IGP and AICAR. The polypeptide is Imidazole glycerol phosphate synthase subunit HisH 2 (hisH2) (Parasynechococcus marenigrum (strain WH8102)).